The following is a 432-amino-acid chain: MLAGRAARTCALLALCLLGSGAQDFGPTRFICTSVPVDADMCAASVAAGGAEELRSNVLQLRETVLQQKETILSQKETIRELTTKLGRCESQSTLDSGPGEARSGGGRKQPGSGKNTMGDLSRTPAAETLSQLGQTLQSLKTRLENLEQYSRLNSSSQTNSLKDLLQSKIDDLERQVLSRVNTLEEGKGGPKNDTEERAKIESALTSLHQRISELEKGQKDNRPGDKFQLTFPLRTNYMYAKVKKSLPEMYAFTVCMWLKSSAAPGVGTPFSYAVPGQANELVLIEWGNNPMEILINDKVAKLPFVINDGKWHHICVTWTTRDGVWEAYQDGTQGGNGENLAPYHPIKPQGVLVLGQEQDTLGGGFDATQAFVGELAHFNIWDRKLTPGEVYNLATCSSKALSGNVIAWAESQIEIFGGATKWTFEACRQIN.

An N-terminal signal peptide occupies residues 1–22 (MLAGRAARTCALLALCLLGSGA). Residues 88 to 122 (RCESQSTLDSGPGEARSGGGRKQPGSGKNTMGDLS) are disordered. Residues Asn-154 and Asn-193 are each glycosylated (N-linked (GlcNAc...) asparagine). One can recognise a Pentraxin (PTX) domain in the interval 226–428 (DKFQLTFPLR…GATKWTFEAC (203 aa)). An intrachain disulfide couples Cys-256 to Cys-316. Ca(2+) is bound by residues Asn-280, Glu-358, Gln-359, Asp-360, and Gln-370.

Homooligomer or heterooligomer (probably pentamer) with neuronal pentraxin receptor (NPTXR). The cofactor is Ca(2+). Expressed in brain and kidney.

The protein resides in the secreted. It is found in the cytoplasmic vesicle. Its subcellular location is the secretory vesicle. The protein localises to the endoplasmic reticulum. Its function is as follows. May be involved in mediating uptake of synaptic material during synapse remodeling or in mediating the synaptic clustering of AMPA glutamate receptors at a subset of excitatory synapses. The polypeptide is Neuronal pentraxin-1 (Nptx1) (Mus musculus (Mouse)).